The chain runs to 989 residues: Translation initiation factor IF-2 (989 aa).

Disordered stretches follow at residues 28-60 (GVTK…TDAD) and 97-397 (VRRD…DQNT). 2 stretches are compositionally biased toward basic and acidic residues: residues 40 to 60 (ETDK…TDAD) and 122 to 178 (ELQR…EAAK). The span at 182–223 (AAAAEAAAREQQTQASKPAQAAQPAAAKAEPVAAKAAEPVVA) shows a compositional bias: low complexity. The segment covering 231 to 280 (ERAAAERAAQREAAKKAEDAARQAAEKARAEQEEIAKRRAAAEAEARAIR) has biased composition (basic and acidic residues). A compositionally biased stretch (low complexity) spans 318 to 345 (RPAGEAPARPAAKKPAAAAPAATTTPSA). Positions 374–387 (TSGGVDRGWRGGPK) are enriched in gly residues. The tr-type G domain maps to 489 to 658 (PRPPVVTVMG…LLQAEVLELK (170 aa)). Positions 498–505 (GHVDHGKT) are G1. 498-505 (GHVDHGKT) lines the GTP pocket. The interval 523-527 (GITQH) is G2. Residues 544–547 (DTPG) form a G3 region. GTP-binding positions include 544 to 548 (DTPGH) and 598 to 601 (NKID). Positions 598–601 (NKID) are G4. The interval 634–636 (SAK) is G5.

The protein belongs to the TRAFAC class translation factor GTPase superfamily. Classic translation factor GTPase family. IF-2 subfamily.

Its subcellular location is the cytoplasm. Its function is as follows. One of the essential components for the initiation of protein synthesis. Protects formylmethionyl-tRNA from spontaneous hydrolysis and promotes its binding to the 30S ribosomal subunits. Also involved in the hydrolysis of GTP during the formation of the 70S ribosomal complex. In Paraburkholderia xenovorans (strain LB400), this protein is Translation initiation factor IF-2.